A 147-amino-acid chain; its full sequence is Allograft inflammatory factor 1 (147 aa).

An N-acetylserine modification is found at serine 2. N6-acetyllysine is present on lysine 11. Serine 39 bears the Phosphoserine mark. 2 EF-hand domains span residues 45-80 (SKLE…LGVP) and 81-115 (KTHL…GKRS). Residues aspartate 58, asparagine 60, asparagine 62, aspartate 64, threonine 100, and aspartate 105 each coordinate Ca(2+). The disordered stretch occupies residues 128–147 (AREKEKPTGPPAKKAISELP).

Homodimer (Potential). Monomer. Interacts with LCP1. Post-translationally, phosphorylated on serine residues.

It is found in the cytoplasm. The protein resides in the cytoskeleton. Its subcellular location is the cell projection. The protein localises to the ruffle membrane. It localises to the phagocytic cup. Actin-binding protein that enhances membrane ruffling and RAC activation. Enhances the actin-bundling activity of LCP1. Binds calcium. Plays a role in RAC signaling and in phagocytosis. May play a role in macrophage activation and function. Promotes the proliferation of vascular smooth muscle cells and of T-lymphocytes. Enhances lymphocyte migration. Plays a role in vascular inflammation. The sequence is that of Allograft inflammatory factor 1 (AIF1) from Macaca mulatta (Rhesus macaque).